Here is a 535-residue protein sequence, read N- to C-terminus: Peptide chain release factor 3 (535 aa).

Residues 8–276 enclose the tr-type G domain; sequence ARRRTFAIIS…ALVEQAPPPG (269 aa). GTP contacts are provided by residues 17-24, 85-89, and 139-142; these read SHPDAGKT, DTPGH, and NKMD.

Belongs to the TRAFAC class translation factor GTPase superfamily. Classic translation factor GTPase family. PrfC subfamily.

It is found in the cytoplasm. Functionally, increases the formation of ribosomal termination complexes and stimulates activities of RF-1 and RF-2. It binds guanine nucleotides and has strong preference for UGA stop codons. It may interact directly with the ribosome. The stimulation of RF-1 and RF-2 is significantly reduced by GTP and GDP, but not by GMP. The protein is Peptide chain release factor 3 of Bordetella petrii (strain ATCC BAA-461 / DSM 12804 / CCUG 43448).